Here is a 75-residue protein sequence, read N- to C-terminus: Small ribosomal subunit protein bS18 (75 aa).

It belongs to the bacterial ribosomal protein bS18 family. As to quaternary structure, part of the 30S ribosomal subunit. Forms a tight heterodimer with protein bS6.

Its function is as follows. Binds as a heterodimer with protein bS6 to the central domain of the 16S rRNA, where it helps stabilize the platform of the 30S subunit. This Photobacterium profundum (strain SS9) protein is Small ribosomal subunit protein bS18.